The chain runs to 227 residues: Urease accessory protein UreF 2 (227 aa).

The protein belongs to the UreF family. As to quaternary structure, ureD, UreF and UreG form a complex that acts as a GTP-hydrolysis-dependent molecular chaperone, activating the urease apoprotein by helping to assemble the nickel containing metallocenter of UreC. The UreE protein probably delivers the nickel.

Its subcellular location is the cytoplasm. Required for maturation of urease via the functional incorporation of the urease nickel metallocenter. This chain is Urease accessory protein UreF 2, found in Brucella anthropi (strain ATCC 49188 / DSM 6882 / CCUG 24695 / JCM 21032 / LMG 3331 / NBRC 15819 / NCTC 12168 / Alc 37) (Ochrobactrum anthropi).